The chain runs to 209 residues: Pyridoxine/pyridoxamine 5'-phosphate oxidase (209 aa).

Substrate-binding positions include 5-8 and K63; that span reads REEY. FMN contacts are provided by residues 58-63, 73-74, R79, K80, and Q102; these read RVVLLK and FT. Positions 120, 124, and 128 each coordinate substrate. FMN-binding positions include 137-138 and W181; that span reads QS. 187–189 is a binding site for substrate; it reads RLH. R191 is a binding site for FMN.

Belongs to the pyridoxamine 5'-phosphate oxidase family. Homodimer. Requires FMN as cofactor.

The enzyme catalyses pyridoxamine 5'-phosphate + O2 + H2O = pyridoxal 5'-phosphate + H2O2 + NH4(+). It carries out the reaction pyridoxine 5'-phosphate + O2 = pyridoxal 5'-phosphate + H2O2. Its pathway is cofactor metabolism; pyridoxal 5'-phosphate salvage; pyridoxal 5'-phosphate from pyridoxamine 5'-phosphate: step 1/1. The protein operates within cofactor metabolism; pyridoxal 5'-phosphate salvage; pyridoxal 5'-phosphate from pyridoxine 5'-phosphate: step 1/1. Catalyzes the oxidation of either pyridoxine 5'-phosphate (PNP) or pyridoxamine 5'-phosphate (PMP) into pyridoxal 5'-phosphate (PLP). This is Pyridoxine/pyridoxamine 5'-phosphate oxidase from Alcanivorax borkumensis (strain ATCC 700651 / DSM 11573 / NCIMB 13689 / SK2).